The primary structure comprises 297 residues: 3-mercaptopyruvate sulfurtransferase (297 aa).

A2 is modified (N-acetylalanine). In terms of domain architecture, Rhodanese 1 spans S25–S144. A Phosphoserine modification is found at S35. Position 40 is an N6-acetyllysine; alternate (K40). At K40 the chain carries N6-succinyllysine; alternate. The segment at G145–P160 is hinge. N6-succinyllysine is present on residues K146 and K164. Residues D174–I288 form the Rhodanese 2 domain. R188 is a binding site for substrate. C248 (cysteine persulfide intermediate) is an active-site residue.

In terms of assembly, monomer (active form). Homodimer; disulfide-linked (inactive form). In terms of tissue distribution, expressed in the brain and retina. In the retina, localized to the inner and outer plexiform layer, the inner and outer nuclear layer and the outer segments of photoreceptors. In the brain, localized to neurons of mitral cell layers, glomerular, and external plexiform layers in the olfactory bulb. Also found in Purkinje cell stomata and proximal dendrites. In the spinal cord, localized to large neurons. In the cerebral cortex, localized to pyramidial neurons in layers II/III and V, and in layers I-VI of neocortical areas. In the hippocampus, found in CA1 and CA3 pyramidal cells.

It is found in the cytoplasm. Its subcellular location is the mitochondrion. The protein resides in the synapse. It localises to the synaptosome. The enzyme catalyses 2-oxo-3-sulfanylpropanoate + [thioredoxin]-dithiol = [thioredoxin]-disulfide + hydrogen sulfide + pyruvate + H(+). With respect to regulation, by oxidative stress, and thioredoxin. Under oxidative stress conditions, the catalytic cysteine site is converted to a sulfenate which inhibits the MPST enzyme activity. Reduced thioredoxin cleaves an intersubunit disulfide bond to turn on the redox switch and reactivate the enzyme. Inhibited by different oxidants, hydrogen peroxide and tetrathionate. Its function is as follows. Transfer of a sulfur ion to cyanide or to other thiol compounds. Also has weak rhodanese activity. Detoxifies cyanide and is required for thiosulfate biosynthesis. Acts as an antioxidant. In combination with cysteine aminotransferase (CAT), contributes to the catabolism of cysteine and is an important producer of hydrogen sulfide in the brain, retina and vascular endothelial cells. Hydrogen sulfide H(2)S is an important synaptic modulator, signaling molecule, smooth muscle contractor and neuroprotectant. Its production by the 3MST/CAT pathway is regulated by calcium ions. This Mus musculus (Mouse) protein is 3-mercaptopyruvate sulfurtransferase (Mpst).